Here is a 246-residue protein sequence, read N- to C-terminus: Pyridoxine 5'-phosphate synthase (246 aa).

Position 12 (Asn-12) interacts with 3-amino-2-oxopropyl phosphate. 14–15 serves as a coordination point for 1-deoxy-D-xylulose 5-phosphate; that stretch reads DH. Arg-23 lines the 3-amino-2-oxopropyl phosphate pocket. Residue His-48 is the Proton acceptor of the active site. Residues Arg-50 and His-55 each coordinate 1-deoxy-D-xylulose 5-phosphate. Residue Glu-75 is the Proton acceptor of the active site. Thr-105 provides a ligand contact to 1-deoxy-D-xylulose 5-phosphate. His-196 acts as the Proton donor in catalysis. Residues Gly-197 and 218–219 contribute to the 3-amino-2-oxopropyl phosphate site; that span reads GH.

This sequence belongs to the PNP synthase family. As to quaternary structure, homooctamer; tetramer of dimers.

The protein resides in the cytoplasm. It carries out the reaction 3-amino-2-oxopropyl phosphate + 1-deoxy-D-xylulose 5-phosphate = pyridoxine 5'-phosphate + phosphate + 2 H2O + H(+). The protein operates within cofactor biosynthesis; pyridoxine 5'-phosphate biosynthesis; pyridoxine 5'-phosphate from D-erythrose 4-phosphate: step 5/5. Catalyzes the complicated ring closure reaction between the two acyclic compounds 1-deoxy-D-xylulose-5-phosphate (DXP) and 3-amino-2-oxopropyl phosphate (1-amino-acetone-3-phosphate or AAP) to form pyridoxine 5'-phosphate (PNP) and inorganic phosphate. This is Pyridoxine 5'-phosphate synthase from Pseudomonas syringae pv. syringae (strain B728a).